Here is a 42-residue protein sequence, read N- to C-terminus: Snaclec lebecetin subunit alpha (42 aa).

Positions 1–42 (DQDCLPGWSSHEGHCYKVFNLDKTWEDAEKFCTEQPSNGHLV) constitute a C-type lectin domain. A disulfide bridge connects residues C4 and C15.

Heterodimer of subunits alpha and beta; disulfide-linked. Ca(2+) serves as cofactor. Glycosylated. Expressed by the venom gland.

The protein localises to the secreted. Binds to the platelet GPIb/IX/V receptor system and inhibits ristocetin-induced platelet aggregation in human platelet-rich plasma. Strongly inhibits platelet aggregation induced by ADP, calcium ionophore, thrombin and collagen. Does not inhibit U46619-induced platelet aggregation. In Macrovipera lebetinus (Levantine viper), this protein is Snaclec lebecetin subunit alpha.